The chain runs to 489 residues: uncharacterized protein (489 aa).

12 helical membrane-spanning segments follow: residues 14-34 (LLFV…ISLF), 36-56 (LGPF…IVTL), 100-120 (IIGP…FSGI), 127-147 (LVNT…LAFI), 158-178 (LIAL…IVAI), 203-223 (EISF…YAGV), 241-261 (ILIV…IILN), 286-306 (AAGL…NVST), 344-364 (IWFT…IPLV), 380-400 (VGSA…FKFI), 419-439 (LFCL…FPVI), and 449-469 (HTLT…LFLL).

To M.genitalium MG226.

The protein localises to the cell membrane. This is an uncharacterized protein from Mycoplasma genitalium (strain ATCC 33530 / DSM 19775 / NCTC 10195 / G37) (Mycoplasmoides genitalium).